A 222-amino-acid polypeptide reads, in one-letter code: Lipid transferase CIDEC (222 aa).

Polar residues predominate over residues 1–19; that stretch reads MAMYTAVSTSVVTQQQLSE. Disordered regions lie at residues 1-33 and 203-222; these read MAMY…CRVT and EQPP…KMLQ. The tract at residues 1–33 is required for liquid-liquid phase separation (LLPS); that stretch reads MAMYTAVSTSVVTQQQLSEPSAEAPRARPCRVT. The CIDE-N domain occupies 26-103; sequence RARPCRVTTA…VLHKGQKWQP (78 aa).

It belongs to the CIDE family. Homodimer. Homooligomer; undergoes liquid-liquid phase separation (LLPS) via its N-terminus, facilitating lipid droplet fusion, occurs at the lipid droplet contact sites. Interacts with CIDEA. Interacts with PLIN1. Interacts with NFAT5; this interaction is direct and retains NFAT5 in the cytoplasm. Interacts with CEBPB. Interacts with isoform CLSTN3beta of CLSTN3; inhibiting the lipid transferase activity of CIDEC. In terms of processing, ubiquitinated and targeted to proteasomal degradation, resulting in a short half-life (about 15 minutes in 3T3-L1 cells). Protein stability depends on triaclyglycerol synthesis, fatty acid availability and lipid droplet formation.

Its subcellular location is the lipid droplet. It localises to the endoplasmic reticulum. The protein localises to the nucleus. The catalysed reaction is a triacyl-sn-glycerol(in) = a triacyl-sn-glycerol(out). Its function is as follows. Lipid transferase specifically expressed in white adipose tissue, which promotes unilocular lipid droplet formation by mediating lipid droplet fusion. Lipid droplet fusion promotes their enlargement, restricting lipolysis and favoring lipid storage. Localizes on the lipid droplet surface, at focal contact sites between lipid droplets, and mediates atypical lipid droplet fusion by undergoing liquid-liquid phase separation (LLPS) and promoting directional net neutral lipid transfer from the smaller to larger lipid droplets. The transfer direction may be driven by the internal pressure difference between the contacting lipid droplet pair. Its role in neutral lipid transfer and lipid droplet enlargement is activated by the interaction with PLIN1. May also act as a CEBPB coactivator in the white adipose tissue to control the expression of a subset of CEBPB downstream target genes, including SOCS1, SOCS3, TGFB1, TGFBR1, ID2 and XDH. When overexpressed in preadipocytes, induces apoptosis or increases cell susceptibility to apoptosis induced by serum deprivation or TGFB treatment. This chain is Lipid transferase CIDEC, found in Bos taurus (Bovine).